Reading from the N-terminus, the 977-residue chain is Serine/threonine-protein kinase/endoribonuclease IRE1 (977 aa).

An N-terminal signal peptide occupies residues 1-18 (MPARRLLLLLTLLLPGLG). Topologically, residues 19-443 (IFGSTSTVTL…EAPVDSMLKD (425 aa)) are lumenal. An N-linked (GlcNAc...) asparagine glycan is attached at Asn-176. A compositionally biased stretch (polar residues) spans 410–419 (TSENAPTTVS). The segment at 410–434 (TSENAPTTVSRDVEEKPAHAPARPE) is disordered. A helical membrane pass occupies residues 444–464 (MATIILSTFLLIGWVAFIITY). Residues 465–977 (PLSMHQQQQL…PQPPVTPDAL (513 aa)) lie on the Cytoplasmic side of the membrane. The disordered stretch occupies residues 491–559 (QQQQQLPFHP…PSLEQDDGDE (69 aa)). Low complexity predominate over residues 513–552 (TSGPYSESSGTSSPSTSPRASNHSLCSGSSASKAGSSPSL). The Protein kinase domain occupies 571–832 (FCPKDVLGHG…AKHVLKHPFF (262 aa)). ATP-binding positions include 577–585 (LGHGAEGTI), Lys-599, and 643–645 (ELC). Asp-688 acts as the Proton acceptor in catalysis. ATP-binding positions include 690 to 693 (KPHN) and Asp-711. Residues Ser-724 and Ser-729 each carry the phosphoserine modification. The 129-residue stretch at 835–963 (LEKQLQFFQD…ERLFQPYYFH (129 aa)) folds into the KEN domain. Positions 906–907 (NK) are interacts with hydroxy-aryl-aldehyde inhibitors. Position 973 is a phosphothreonine (Thr-973).

The protein belongs to the protein kinase superfamily. Ser/Thr protein kinase family. In terms of assembly, monomer. Homodimer; disulfide-linked; homodimerization takes place in response to endoplasmic reticulum stress and promotes activation of the kinase and endoribonuclease activities. Dimer formation is driven by hydrophobic interactions within the N-terminal luminal domains and stabilized by disulfide bridges. Interacts (via the luminal region) with DNAJB9/ERdj4; interaction takes place in unstressed cells and promotes recruitment of HSPA5/BiP. Interacts (via the luminal region) with HSPA5/BiP; HSPA5/BiP is a negative regulator of the unfolded protein response (UPR) that prevents homodimerization of ERN1/IRE1 and subsequent activation of the protein. Interaction with HSPA5 also competitively inhibits ERN1 interaction with MANF. Interacts with PDIA6, a negative regulator of the UPR; the interaction is direct and disrupts homodimerization. Interacts with DAB2IP (via PH domain); the interaction occurs in a endoplasmic reticulum stress-induced dependent manner and is required for subsequent recruitment of TRAF2 to ERN1/IRE1. Interacts with TAOK3 and TRAF2. Interacts with RNF13. Interacts with LACC1. Interacts (when unphosphorylated) with DDRGK1; interaction is dependent on UFM1 and takes place in response to endoplasmic reticulum stress, regulating ERN1/IRE1-alpha stability. Interacts (via N-terminus) with P4HB/PDIA1; the interaction is enhanced by phosphorylation of P4HB by FAM20C in response to endoplasmic reticulum stress and results in attenuation of ERN1 activity. Interacts with TMBIM6; this interaction inhibits ERN1 activity. Interacts (via luminal domain) with MANF (via C-terminus); the interaction is decreased in the presence of increasing concentrations of Ca(2+). Mg(2+) is required as a cofactor. Autophosphorylated following homodimerization. Autophosphorylation promotes activation of the endoribonuclease domain. In response to ER stress, phosphorylated at Ser-724, Ser-729 and possibly Ser-726; phosphorylation promotes oligomerization and endoribonuclease activity. Dephosphorylated at Ser-724, Ser-729 and possibly Ser-726 by RPAP2 to abort failed ER-stress adaptation and trigger apoptosis. Phosphorylated at Ser-724; in response to the ER stressor tunicamycin. In terms of processing, ADP-ribosylated by PARP16 upon ER stress, which increases both kinase and endonuclease activities. Ubiquitously expressed. High levels observed in pancreatic tissue.

Its subcellular location is the endoplasmic reticulum membrane. It catalyses the reaction L-seryl-[protein] + ATP = O-phospho-L-seryl-[protein] + ADP + H(+). The catalysed reaction is L-threonyl-[protein] + ATP = O-phospho-L-threonyl-[protein] + ADP + H(+). With respect to regulation, the kinase domain is activated by trans-autophosphorylation following homodimerization. Kinase activity is required for activation of the endoribonuclease domain. Endoribonuclease activity is specifically inhibited by hydroxy-aryl-aldehydes (HAA). Functionally, serine/threonine-protein kinase and endoribonuclease that acts as a key sensor for the endoplasmic reticulum unfolded protein response (UPR). In unstressed cells, the endoplasmic reticulum luminal domain is maintained in its inactive monomeric state by binding to the endoplasmic reticulum chaperone HSPA5/BiP. Accumulation of misfolded proteins in the endoplasmic reticulum causes release of HSPA5/BiP, allowing the luminal domain to homodimerize, promoting autophosphorylation of the kinase domain and subsequent activation of the endoribonuclease activity. The endoribonuclease activity is specific for XBP1 mRNA and excises 26 nucleotides from XBP1 mRNA. The resulting spliced transcript of XBP1 encodes a transcriptional activator protein that up-regulates expression of UPR target genes. Acts as an upstream signal for ER stress-induced GORASP2-mediated unconventional (ER/Golgi-independent) trafficking of CFTR to cell membrane by modulating the expression and localization of SEC16A. The sequence is that of Serine/threonine-protein kinase/endoribonuclease IRE1 from Homo sapiens (Human).